Consider the following 302-residue polypeptide: Zinc transporter ZIP1 (302 aa).

The Extracellular segment spans residues 1–6 (MEYLLQ). The chain crosses the membrane as a helical span at residues 7–27 (VKIAALVGLLFLTLIFGFIPA). Residues 28–44 (RVKWFRDTDGTETHRTV) are Cytoplasmic-facing. Residues 45-65 (LSLISCFAGGVFLSACFLDII) traverse the membrane as a helical segment. Residues 66-80 (PDYLSDINTELHARQ) are Extracellular-facing. Residues 81 to 101 (LETSFPLPEFIMAAGFFTVLI) form a helical membrane-spanning segment. Residues 102 to 158 (LERIVLNCKEMRATHEERTTLIPERKSGHGHGHGDGPDPESSGHHVHVDFQAHSPFR) are Cytoplasmic-facing. The segment at 123–145 (IPERKSGHGHGHGDGPDPESSGH) is disordered. Residues 159-179 (SFMLFLSLSLHSIFEGLAIGL) form a helical membrane-spanning segment. Topologically, residues 180–185 (QTTDPK) are extracellular. A helical membrane pass occupies residues 186 to 206 (VVEICIAILVHKSIIVFSLAV). Residues 207–216 (KLVQSAIPPL) lie on the Cytoplasmic side of the membrane. A helical transmembrane segment spans residues 217-237 (WVAAYIGVFALMSPVGIAIGI). The Extracellular portion of the chain corresponds to 238 to 251 (SVMEAQLAAGPLIQ). Residues 252–272 (AILEGFAAGTFVYITFLEILP) traverse the membrane as a helical segment. Residues 273 to 281 (HELNSPGKQ) are Cytoplasmic-facing. A helical membrane pass occupies residues 282–302 (LLKVLFLLLGFSIMAALSFLG).

It belongs to the ZIP transporter (TC 2.A.5) family. Highest levels in ovary, lower levels in intestine and gill, barely detected in kidney.

It localises to the cell membrane. Its subcellular location is the endoplasmic reticulum membrane. It catalyses the reaction Zn(2+)(in) = Zn(2+)(out). Its function is as follows. Transporter for the divalent cation Zn(2+). Mediates the influx of Zn(2+) into cells from extracellular space. In Takifugu rubripes (Japanese pufferfish), this protein is Zinc transporter ZIP1 (slc39a1).